Consider the following 128-residue polypeptide: UPF0102 protein Rfer_3873 (128 aa).

Residues M1–Q15 are compositionally biased toward polar residues. Positions M1–A20 are disordered.

This sequence belongs to the UPF0102 family.

This is UPF0102 protein Rfer_3873 from Albidiferax ferrireducens (strain ATCC BAA-621 / DSM 15236 / T118) (Rhodoferax ferrireducens).